Consider the following 352-residue polypeptide: MLTLSDFDFPLPPELIAQSALPDRSASRLLVVERLAPADTADAVRMVDRAFSDIVDYLRPDDLLVFNDTRVIKARFFGHKPSGGKIEVLVERVVDSHTVLAQVRASKTPTEGSILHLADGAFAVTVGPRVDQFFTLRFPEPALDLIERYGRLPLPPYIRHDPDAYDETRYQTVYARSPGAVAAPTAGLHFDDALFARLNAAGVRRAFLTLHVGAGTFQPVRTENLAEHKMHSEWYAVSADLAQAVRDTRARGGRVIAVGTTSLRALESAAQADGTLAAGSGDTDIFITPGYRFRLVDALITNFHLPKSTLLMLVSALAGVEAIRAAYRHAVEQRYRFFSYGDAMLLTRQPGA.

The protein belongs to the QueA family. Monomer.

It is found in the cytoplasm. It catalyses the reaction 7-aminomethyl-7-carbaguanosine(34) in tRNA + S-adenosyl-L-methionine = epoxyqueuosine(34) in tRNA + adenine + L-methionine + 2 H(+). It functions in the pathway tRNA modification; tRNA-queuosine biosynthesis. Transfers and isomerizes the ribose moiety from AdoMet to the 7-aminomethyl group of 7-deazaguanine (preQ1-tRNA) to give epoxyqueuosine (oQ-tRNA). The protein is S-adenosylmethionine:tRNA ribosyltransferase-isomerase of Cupriavidus necator (strain ATCC 17699 / DSM 428 / KCTC 22496 / NCIMB 10442 / H16 / Stanier 337) (Ralstonia eutropha).